Reading from the N-terminus, the 2157-residue chain is DExH-box ATP-dependent RNA helicase DExH14 (2157 aa).

Positions Lys-374–Thr-394 are disordered. Positions Ala-375–Thr-394 are enriched in polar residues. The 183-residue stretch at Gln-517–Leu-699 folds into the Helicase ATP-binding 1 domain. Ala-530–Thr-537 is a binding site for ATP. A DEVH box motif is present at residues Asp-641 to His-644. Residues Cys-734–Val-932 form the Helicase C-terminal 1 domain. The 308-residue stretch at Cys-1008–Ser-1315 folds into the SEC63 1 domain. The Helicase ATP-binding 2 domain maps to His-1365–Phe-1540. Residue Ala-1378–Thr-1385 participates in ATP binding. Positions Asp-1482–His-1485 match the DEIH box motif. Residues Asn-1571–Val-1780 form the Helicase C-terminal 2 domain. Positions Pro-1839–Ile-2150 constitute an SEC63 2 domain.

This sequence belongs to the DExH box helicase family.

The protein localises to the nucleus. The catalysed reaction is ATP + H2O = ADP + phosphate + H(+). Functionally, RNA helicase that plays an essential role in pre-mRNA splicing as component of the U5 snRNP and U4/U6-U5 tri-snRNP complexes. Involved in spliceosome assembly, activation and disassembly. The sequence is that of DExH-box ATP-dependent RNA helicase DExH14 from Arabidopsis thaliana (Mouse-ear cress).